The chain runs to 358 residues: Protein PXR1 (358 aa).

Disordered stretches follow at residues 1-26 (MGLAAPKNRSKISNDPQNTTWANNTS) and 146-342 (EVKT…KSAT). The segment covering 11 to 26 (KISNDPQNTTWANNTS) has biased composition (polar residues). The G-patch domain occupies 25-79 (TSRFGHRILTSQGWQPGDSLGASDAAHAAHYTVASQSHIRVLLKDDNLGLGAKRG). 2 stretches are compositionally biased toward basic and acidic residues: residues 146–171 (EVKTETQAKVEVKSEPESDGAKEDDR) and 199–217 (SMDLRDQAKKDIAAESSKD). Basic residues predominate over residues 218–227 (KKGKKSKKDK). A compositionally biased stretch (acidic residues) spans 287–299 (DVEDLSSESEDES). Residues 300–315 (TPSASRPATGTSTPTV) show a composition bias toward polar residues. The span at 328–339 (HSVRQKWIRSKK) shows a compositional bias: basic residues.

This sequence belongs to the PINX1 family.

Its subcellular location is the nucleus. It localises to the nucleolus. Involved in rRNA-processing at A0, A1 and A2 sites and negatively regulates telomerase. This Phaeosphaeria nodorum (strain SN15 / ATCC MYA-4574 / FGSC 10173) (Glume blotch fungus) protein is Protein PXR1 (PXR1).